A 172-amino-acid polypeptide reads, in one-letter code: Myosin regulatory light chain (172 aa).

Threonine 17 is modified (phosphothreonine). Residue serine 18 is modified to Phosphoserine. 3 consecutive EF-hand domains span residues 27-62 (AQIQEFKEAFNMIDQNRDGFIDQEDLKDMFASLGKE), 98-133 (DPEEVIRNAFQCFDEDNSGKLNEEHLRELLTTMGER), and 134-168 (YSEEQVDELFRDAPIKGGQFDYVEFTRMLKHGTKD). The Ca(2+) site is built by aspartate 40, asparagine 42, aspartate 44, and aspartate 51.

As to quaternary structure, myosin is a hexamer of 2 heavy chains and 4 light chains (two regulatory light chains and two essential light chains). May be phosphorylated by let-502 or/and pak-1 and dephosphorylated by mel-11 to regulate its activation and myosin II-mediated contraction. As to expression, expressed in the spermathecal and uterine walls. Weak expression in gonadal sheath and intestinal muscle. Not detected in vulval, pharyngeal or body wall muscles.

It is found in the cytoplasm. It localises to the cytoskeleton. Functionally, regulates myosin II activity and organization during embryo elongation. May be involved in the organization of mlc-5 into bundles. Required maternally for cytokinesis during meiosis and mitosis in the early embryo and for the establishment of embryonic anterior-posterior polarity. The sequence is that of Myosin regulatory light chain from Caenorhabditis elegans.